Consider the following 104-residue polypeptide: Flagellar hook-basal body complex protein FliE (104 aa).

The protein belongs to the FliE family.

The protein resides in the bacterial flagellum basal body. The chain is Flagellar hook-basal body complex protein FliE from Escherichia coli (strain SE11).